The primary structure comprises 425 residues: Serine--tRNA ligase (425 aa).

Residue 228-230 participates in L-serine binding; it reads TAE. 259–261 serves as a coordination point for ATP; that stretch reads RSE. Glu-282 lines the L-serine pocket. 346 to 349 contacts ATP; the sequence is EIAS. Ser-382 is a binding site for L-serine.

Belongs to the class-II aminoacyl-tRNA synthetase family. Type-1 seryl-tRNA synthetase subfamily. Homodimer. The tRNA molecule binds across the dimer.

Its subcellular location is the cytoplasm. The catalysed reaction is tRNA(Ser) + L-serine + ATP = L-seryl-tRNA(Ser) + AMP + diphosphate + H(+). It carries out the reaction tRNA(Sec) + L-serine + ATP = L-seryl-tRNA(Sec) + AMP + diphosphate + H(+). It participates in aminoacyl-tRNA biosynthesis; selenocysteinyl-tRNA(Sec) biosynthesis; L-seryl-tRNA(Sec) from L-serine and tRNA(Sec): step 1/1. Functionally, catalyzes the attachment of serine to tRNA(Ser). Is also able to aminoacylate tRNA(Sec) with serine, to form the misacylated tRNA L-seryl-tRNA(Sec), which will be further converted into selenocysteinyl-tRNA(Sec). This is Serine--tRNA ligase from Rickettsia felis (strain ATCC VR-1525 / URRWXCal2) (Rickettsia azadi).